A 68-amino-acid chain; its full sequence is Large ribosomal subunit protein bL35 (68 aa).

This sequence belongs to the bacterial ribosomal protein bL35 family.

The sequence is that of Large ribosomal subunit protein bL35 from Rickettsia felis (strain ATCC VR-1525 / URRWXCal2) (Rickettsia azadi).